The primary structure comprises 190 residues: Shikimate kinase (190 aa).

13–18 is an ATP binding site; it reads GSGKTT. Residue T17 coordinates Mg(2+). D35, R59, and G81 together coordinate substrate. R119 contacts ATP. R138 contributes to the substrate binding site. Residue Q155 participates in ATP binding.

Belongs to the shikimate kinase family. In terms of assembly, monomer. Mg(2+) serves as cofactor.

Its subcellular location is the cytoplasm. The catalysed reaction is shikimate + ATP = 3-phosphoshikimate + ADP + H(+). It participates in metabolic intermediate biosynthesis; chorismate biosynthesis; chorismate from D-erythrose 4-phosphate and phosphoenolpyruvate: step 5/7. Catalyzes the specific phosphorylation of the 3-hydroxyl group of shikimic acid using ATP as a cosubstrate. This is Shikimate kinase from Nitrosococcus oceani (strain ATCC 19707 / BCRC 17464 / JCM 30415 / NCIMB 11848 / C-107).